A 270-amino-acid chain; its full sequence is 5'-nucleotidase SurE (270 aa).

4 residues coordinate a divalent metal cation: aspartate 14, aspartate 15, serine 46, and asparagine 104.

It belongs to the SurE nucleotidase family. It depends on a divalent metal cation as a cofactor.

The protein resides in the cytoplasm. The enzyme catalyses a ribonucleoside 5'-phosphate + H2O = a ribonucleoside + phosphate. Nucleotidase that shows phosphatase activity on nucleoside 5'-monophosphates. The protein is 5'-nucleotidase SurE of Microcystis aeruginosa (strain NIES-843 / IAM M-2473).